Reading from the N-terminus, the 340-residue chain is Short-chain dehydrogenase/reductase prx1 (340 aa).

5 residues coordinate NADP(+): Ile-60, Lys-84, Asp-104, Asn-131, and Lys-162. The Proton donor role is filled by Ser-184. Tyr-210 and Lys-214 together coordinate NADP(+). The active-site Proton acceptor is Tyr-210. Catalysis depends on Lys-214, which acts as the Lowers pKa of active site Tyr.

It belongs to the short-chain dehydrogenases/reductases (SDR) family.

It participates in sesquiterpene biosynthesis. Functionally, short-chain dehydrogenase/reductase; part of the gene cluster that mediates the biosynthesis of PR-toxin, a bicyclic sesquiterpene belonging to the eremophilane class and acting as a mycotoxin. The first step of the pathway is catalyzed by the aristolochene synthase which performs the cyclization of trans,trans-farnesyl diphosphate (FPP) to the bicyclic sesquiterpene aristolochene. Following the formation of aristolochene, the non-oxygenated aristolochene is converted to the trioxygenated intermediate eremofortin B, via 7-epi-neopetasone. This conversion appears to involve three enzymes, a hydroxysterol oxidase-like enzyme, the quinone-oxidase prx3 that forms the quinone-type-structure in the bicyclic nucleus of aristolochene with the C8-oxo group and the C-3 hydroxyl group, and the P450 monooxygenase prx9 that introduces the epoxide at the double bond between carbons 1 and 2. No monoxy or dioxy-intermediates have been reported to be released to the broth, so these three early oxidative reactions may be coupled together. Eremofortin B is further oxidized by another P450 monooxygenase, that introduces a second epoxide between carbons 7 and 11 prior to acetylation to eremofortin A by the acetyltransferase prx11. The second epoxidation may be performed by a second P450 monooxygenase. After the acetylation step, eremofortin A is converted to eremofortin C and then to PR-toxin. First the conversion of eremofortin A to eremofortin C proceeds by oxidation of the side chain of the molecule at C-12 and is catalyzed by the short-chain oxidoreductase prx1. The cytochrome P450 monooxygenase prx8 also plays a role in this step. The primary alcohol formed at C-12 is finally oxidized by the short-chain alcohol dehydrogenase prx4 that forms PR-toxin. This Penicillium rubens (strain ATCC 28089 / DSM 1075 / NRRL 1951 / Wisconsin 54-1255) (Penicillium chrysogenum) protein is Short-chain dehydrogenase/reductase prx1.